The chain runs to 86 residues: Antimicrobial peptide 2 (86 aa).

The N-terminal stretch at 1-25 (MVNMKCVALIVIVMMAFMMVDPSMG) is a signal peptide. 3 cysteine pairs are disulfide-bonded: cysteine 29/cysteine 40, cysteine 34/cysteine 46, and cysteine 39/cysteine 53. The Chitin-binding type-1 domain occupies 29–53 (CVRGRCPSGMCCSQFGYCGKGPKYC). Positions 56 to 86 (ASTTVDHQADVAATKTAKNPTDAKLAGAGSP) are cleaved as a propeptide — removed in mature form.

In terms of assembly, homodimer.

Its function is as follows. Chitin-binding protein with a defensive function against numerous chitin containing fungal pathogens. It is also a potent inhibitor of Gram-positive bacteria. The polypeptide is Antimicrobial peptide 2 (Amaranthus caudatus (Love-lies-bleeding)).